The primary structure comprises 491 residues: MYRKSALELRDAVVNREISVTAITEYFYHRIESYDEQIGSFLSLCKERALLRASRIDDKLAKGDPIGILAGIPIGVKDNIHITGVKTTCASKMLENFVAPFDATVVRRIEMEDGILLGKLNMDEFAMGSTTRYSAFQHTNNPWDLERVPGGSSGGSAAAVSARFCPIALGSDTGGSIRQPAAFCGVVGFKPSYGAVSRYGLVAFGSSLDQIGPLTTVVEDVALAMDAFAGRDIKDATTRDFFRGTFSQALSLEVPKLIGVPRGFLDGLQEDCKENFFEALAVMERQGSRIIDIDLSVLKHAVPVYYIVASAEAATNLARFDGVRYGHRCAQADNMQEMYARSRKEGFGKEVTRRILLGNYVLSAERQNIFYKKGTAVRATLIEAFQSAFECCDVIAMPVCASPAIRDTDVLDPVSLYLQDIYTVAVNLAYLPAISVPSGLSKEGLPLGVQFIGKRGADQQICQVGYSFQEHSQIKQLYPKAVNGLFDGGME.

Active-site charge relay system residues include K77 and S152. The active-site Acyl-ester intermediate is the S176.

The protein belongs to the amidase family. GatA subfamily. As to quaternary structure, heterotrimer of A, B and C subunits.

It carries out the reaction L-glutamyl-tRNA(Gln) + L-glutamine + ATP + H2O = L-glutaminyl-tRNA(Gln) + L-glutamate + ADP + phosphate + H(+). Functionally, allows the formation of correctly charged Gln-tRNA(Gln) through the transamidation of misacylated Glu-tRNA(Gln) in organisms which lack glutaminyl-tRNA synthetase. The reaction takes place in the presence of glutamine and ATP through an activated gamma-phospho-Glu-tRNA(Gln). This chain is Glutamyl-tRNA(Gln) amidotransferase subunit A (gatA), found in Chlamydia muridarum (strain MoPn / Nigg).